Reading from the N-terminus, the 287-residue chain is SPX domain-containing protein 2 (287 aa).

The SPX domain occupies 1–162; sequence MKFGKSLSNQ…GALIRLPFIQ (162 aa). Residues 36–50 are compositionally biased toward basic and acidic residues; it reads EPRSVENRPNKRSRS. Disordered stretches follow at residues 36-61 and 194-213; these read EPRS…DPTV and KSRN…VKTG.

It localises to the nucleus. Functionally, may inhibit PHR1 DNA-binding activity in a Pi-dependent manner. This chain is SPX domain-containing protein 2, found in Arabidopsis thaliana (Mouse-ear cress).